The primary structure comprises 215 residues: 3-demethoxyubiquinol 3-hydroxylase (215 aa).

Positions 64, 94, 97, 146, 178, and 181 each coordinate Fe cation.

This sequence belongs to the COQ7 family. Fe cation is required as a cofactor.

Its subcellular location is the cell membrane. The catalysed reaction is a 5-methoxy-2-methyl-3-(all-trans-polyprenyl)benzene-1,4-diol + AH2 + O2 = a 3-demethylubiquinol + A + H2O. The protein operates within cofactor biosynthesis; ubiquinone biosynthesis. In terms of biological role, catalyzes the hydroxylation of 2-nonaprenyl-3-methyl-6-methoxy-1,4-benzoquinol during ubiquinone biosynthesis. This Pseudomonas fluorescens (strain ATCC BAA-477 / NRRL B-23932 / Pf-5) protein is 3-demethoxyubiquinol 3-hydroxylase.